The sequence spans 298 residues: HTH-type transcriptional regulator ArgP (298 aa).

The 57-residue stretch at 4-60 (LDYKWIEALDAVVYQGSFERAAEHLFVSQSAISQRIKQLEKFLAQPVLIREQPPKPT) folds into the HTH lysR-type domain. A DNA-binding region (H-T-H motif) is located at residues 21-40 (FERAAEHLFVSQSAISQRIK).

Belongs to the LysR transcriptional regulatory family. As to quaternary structure, homodimer.

In terms of biological role, controls the transcription of genes involved in arginine and lysine metabolism. This Vibrio parahaemolyticus serotype O3:K6 (strain RIMD 2210633) protein is HTH-type transcriptional regulator ArgP.